A 118-amino-acid chain; its full sequence is Small ribosomal subunit protein uS13 (118 aa).

Residues 96-118 form a disordered region; sequence PLRGQRTRTNARTRKGPRKAIKK.

It belongs to the universal ribosomal protein uS13 family. As to quaternary structure, part of the 30S ribosomal subunit. Forms a loose heterodimer with protein S19. Forms two bridges to the 50S subunit in the 70S ribosome.

In terms of biological role, located at the top of the head of the 30S subunit, it contacts several helices of the 16S rRNA. In the 70S ribosome it contacts the 23S rRNA (bridge B1a) and protein L5 of the 50S subunit (bridge B1b), connecting the 2 subunits; these bridges are implicated in subunit movement. Contacts the tRNAs in the A and P-sites. The sequence is that of Small ribosomal subunit protein uS13 from Stenotrophomonas maltophilia (strain K279a).